The chain runs to 258 residues: Ubiquinone/menaquinone biosynthesis C-methyltransferase UbiE (258 aa).

A disordered region spans residues 1-20; sequence MSESRTSADGGMETSYGFRE. Residues Thr81, Asp102, and 130 to 131 each bind S-adenosyl-L-methionine; that span reads NA.

This sequence belongs to the class I-like SAM-binding methyltransferase superfamily. MenG/UbiE family.

The enzyme catalyses a 2-demethylmenaquinol + S-adenosyl-L-methionine = a menaquinol + S-adenosyl-L-homocysteine + H(+). The catalysed reaction is a 2-methoxy-6-(all-trans-polyprenyl)benzene-1,4-diol + S-adenosyl-L-methionine = a 5-methoxy-2-methyl-3-(all-trans-polyprenyl)benzene-1,4-diol + S-adenosyl-L-homocysteine + H(+). It participates in quinol/quinone metabolism; menaquinone biosynthesis; menaquinol from 1,4-dihydroxy-2-naphthoate: step 2/2. The protein operates within cofactor biosynthesis; ubiquinone biosynthesis. Functionally, methyltransferase required for the conversion of demethylmenaquinol (DMKH2) to menaquinol (MKH2) and the conversion of 2-polyprenyl-6-methoxy-1,4-benzoquinol (DDMQH2) to 2-polyprenyl-3-methyl-6-methoxy-1,4-benzoquinol (DMQH2). This Rhizobium etli (strain ATCC 51251 / DSM 11541 / JCM 21823 / NBRC 15573 / CFN 42) protein is Ubiquinone/menaquinone biosynthesis C-methyltransferase UbiE.